Consider the following 418-residue polypeptide: Voltage-gated ClC-type chloride channel ClcB (418 aa).

Transmembrane regions (helical) follow at residues 5–25, 54–74, 146–166, 168–188, 222–242, 260–280, 291–311, 316–336, 352–372, and 380–400; these read LLIA…FRHA, LLTP…WQKF, LWIA…PLAG, LFIA…PVII, ALII…LTLM, LALG…VWGN, APPL…AVLA, GAPG…GMLY, LLLG…APIM, and MTGE…ASVI.

The protein belongs to the chloride channel (TC 2.A.49) family. ClcB subfamily.

It localises to the cell inner membrane. Its function is as follows. Probably acts as an electrical shunt for an outwardly-directed proton pump that is linked to amino acid decarboxylation, as part of the extreme acid resistance (XAR) response. The polypeptide is Voltage-gated ClC-type chloride channel ClcB (Escherichia coli O9:H4 (strain HS)).